Consider the following 149-residue polypeptide: Probable conjugal transfer protein TrbE part 1 (149 aa).

The protein belongs to the TrbE/VirB4 family.

In Sinorhizobium fredii (strain NBRC 101917 / NGR234), this protein is Probable conjugal transfer protein TrbE part 1 (trbEA).